The following is a 297-amino-acid chain: 4-hydroxy-tetrahydrodipicolinate synthase (297 aa).

T49 is a pyruvate binding site. The active-site Proton donor/acceptor is Y137. K166 serves as the catalytic Schiff-base intermediate with substrate. I208 is a binding site for pyruvate.

It belongs to the DapA family. Homotetramer; dimer of dimers.

The protein resides in the cytoplasm. The catalysed reaction is L-aspartate 4-semialdehyde + pyruvate = (2S,4S)-4-hydroxy-2,3,4,5-tetrahydrodipicolinate + H2O + H(+). It functions in the pathway amino-acid biosynthesis; L-lysine biosynthesis via DAP pathway; (S)-tetrahydrodipicolinate from L-aspartate: step 3/4. Its function is as follows. Catalyzes the condensation of (S)-aspartate-beta-semialdehyde [(S)-ASA] and pyruvate to 4-hydroxy-tetrahydrodipicolinate (HTPA). In Chlorobium phaeobacteroides (strain BS1), this protein is 4-hydroxy-tetrahydrodipicolinate synthase.